Here is a 329-residue protein sequence, read N- to C-terminus: tRNA (guanine(10)-N2)-dimethyltransferase (329 aa).

The THUMP domain maps to 40 to 143; it reads NVENVEIFER…KLWIGIRIRE (104 aa).

Belongs to the methyltransferase superfamily. Trm-G10 family. Monomer.

It localises to the cytoplasm. The catalysed reaction is guanosine(10) in tRNA + 2 S-adenosyl-L-methionine = N(2)-dimethylguanosine(10) in tRNA + 2 S-adenosyl-L-homocysteine + 2 H(+). Catalyzes the adenosylmethionine-dependent methylation of the exocyclic amino group (N(2)) of guanosine at position 10 of various tRNAs. Acts via a two-step process that leads to the formation of either N(2)-monomethyl (m(2)G) or N(2)-dimethylguanosine (m(2)(2)G). This is tRNA (guanine(10)-N2)-dimethyltransferase (trmG10) from Pyrococcus abyssi (strain GE5 / Orsay).